The chain runs to 600 residues: 1-deoxy-D-xylulose-5-phosphate synthase (600 aa).

Residues His57 and 98–100 (GHA) each bind thiamine diphosphate. Mg(2+) is bound at residue Asp125. Residues 126 to 127 (AS), Asn155, Tyr264, and Glu343 each bind thiamine diphosphate. Asn155 contacts Mg(2+).

Belongs to the transketolase family. DXPS subfamily. As to quaternary structure, homodimer. It depends on Mg(2+) as a cofactor. Requires thiamine diphosphate as cofactor.

The enzyme catalyses D-glyceraldehyde 3-phosphate + pyruvate + H(+) = 1-deoxy-D-xylulose 5-phosphate + CO2. The protein operates within metabolic intermediate biosynthesis; 1-deoxy-D-xylulose 5-phosphate biosynthesis; 1-deoxy-D-xylulose 5-phosphate from D-glyceraldehyde 3-phosphate and pyruvate: step 1/1. Its function is as follows. Catalyzes the acyloin condensation reaction between C atoms 2 and 3 of pyruvate and glyceraldehyde 3-phosphate to yield 1-deoxy-D-xylulose-5-phosphate (DXP). The chain is 1-deoxy-D-xylulose-5-phosphate synthase from Fusobacterium nucleatum subsp. nucleatum (strain ATCC 25586 / DSM 15643 / BCRC 10681 / CIP 101130 / JCM 8532 / KCTC 2640 / LMG 13131 / VPI 4355).